A 390-amino-acid polypeptide reads, in one-letter code: Digeranylgeranylglycerophospholipid reductase (390 aa).

10 residues coordinate FAD: alanine 18, glutamate 37, cysteine 48, alanine 49, alanine 51, arginine 98, valine 122, aspartate 278, glycine 290, and isoleucine 291. Valine 368 contributes to the a 2,3-bis-O-(geranylgeranyl)-sn-glycerol 1-phospholipid binding site.

This sequence belongs to the geranylgeranyl reductase family. DGGGPL reductase subfamily. FAD is required as a cofactor.

It carries out the reaction a 2,3-bis-O-phytanyl-sn-glycerol 1-phospholipid + 8 A = a 2,3-bis-O-(geranylgeranyl)-sn-glycerol 1-phospholipid + 8 AH2. The enzyme catalyses 2,3-bis-O-(phytanyl)-sn-glycerol 1-phosphate + 8 A = 2,3-bis-O-(geranylgeranyl)-sn-glycerol 1-phosphate + 8 AH2. It catalyses the reaction CDP-2,3-bis-O-(geranylgeranyl)-sn-glycerol + 8 AH2 = CDP-2,3-bis-O-(phytanyl)-sn-glycerol + 8 A. The catalysed reaction is archaetidylserine + 8 AH2 = 2,3-bis-O-phytanyl-sn-glycero-3-phospho-L-serine + 8 A. It functions in the pathway membrane lipid metabolism; glycerophospholipid metabolism. Is involved in the reduction of 2,3-digeranylgeranylglycerophospholipids (unsaturated archaeols) into 2,3-diphytanylglycerophospholipids (saturated archaeols) in the biosynthesis of archaeal membrane lipids. Catalyzes the formation of archaetidic acid (2,3-di-O-phytanyl-sn-glyceryl phosphate) from 2,3-di-O-geranylgeranylglyceryl phosphate (DGGGP) via the hydrogenation of each double bond of the isoprenoid chains. Is also probably able to reduce double bonds of geranyl groups in CDP-2,3-bis-O-(geranylgeranyl)-sn-glycerol and archaetidylserine, thus acting at various stages in the biosynthesis of archaeal membrane lipids. The polypeptide is Digeranylgeranylglycerophospholipid reductase (Methanococcus maripaludis (strain C7 / ATCC BAA-1331)).